The sequence spans 737 residues: tRNA-dihydrouridine(47) synthase [NAD(P)(+)] (737 aa).

Composition is skewed to basic and acidic residues over residues 1 to 11 and 24 to 33; these read MESQETAKRPI and PATKRVKLDD. The disordered stretch occupies residues 1-127; the sequence is MESQETAKRP…GKKKRPKGQN (127 aa). A compositionally biased stretch (low complexity) spans 35 to 44; that stretch reads PVPQIQEEPS. Positions 57–82 are enriched in basic and acidic residues; it reads EDEKPTEQRQDDRDKRRGIAPIKKEY. 2 C3H1-type zinc fingers span residues 142-166 and 187-208; these read CNSV…NALH and CPVW…VESH. FMN-binding positions include 332 to 334 and Gln-407; that span reads PLT. The active-site Proton donor is Cys-439. Residues Lys-479, His-520, 577–579, and 601–602 contribute to the FMN site; these read NGD and GR.

Belongs to the Dus family. Dus3 subfamily. Requires FMN as cofactor.

Its subcellular location is the cytoplasm. It localises to the nucleus. It carries out the reaction 5,6-dihydrouridine(47) in tRNA + NAD(+) = uridine(47) in tRNA + NADH + H(+). It catalyses the reaction 5,6-dihydrouridine(47) in tRNA + NADP(+) = uridine(47) in tRNA + NADPH + H(+). The catalysed reaction is a 5,6-dihydrouridine in mRNA + NAD(+) = a uridine in mRNA + NADH + H(+). The enzyme catalyses a 5,6-dihydrouridine in mRNA + NADP(+) = a uridine in mRNA + NADPH + H(+). Its function is as follows. Catalyzes the synthesis of dihydrouridine, a modified base found in the D-loop of most tRNAs. Specifically modifies U47 in cytoplasmic tRNAs. Catalyzes the synthesis of dihydrouridine in some mRNAs, thereby affecting their translation. The chain is tRNA-dihydrouridine(47) synthase [NAD(P)(+)] (dus-3) from Neurospora crassa (strain ATCC 24698 / 74-OR23-1A / CBS 708.71 / DSM 1257 / FGSC 987).